A 154-amino-acid chain; its full sequence is Ribosome maturation factor RimP (154 aa).

It belongs to the RimP family.

The protein localises to the cytoplasm. Functionally, required for maturation of 30S ribosomal subunits. In Prochlorococcus marinus (strain MIT 9303), this protein is Ribosome maturation factor RimP.